Reading from the N-terminus, the 201-residue chain is MLLFVGLGNPGAKYSRNRHNIGFMAVDEISRRHRFSPWRRRFQGETSEGTLDSERVILLKPTTYMNESGRAVQEAASFFKLGVGDVTVFQDELELAPGKLRVKVGGGIAGHNGLRSISAHLGNDYRRVRLGIGHPGVKELVHGHVLSDFAKSEMPWVEALCEAVADNAELLTGKRDSTFANKVHLALQAKGFLDKGDAGAA.

Residue tyrosine 14 coordinates tRNA. The Proton acceptor role is filled by histidine 19. Tyrosine 64, asparagine 66, and asparagine 112 together coordinate tRNA.

The protein belongs to the PTH family. Monomer.

The protein localises to the cytoplasm. It carries out the reaction an N-acyl-L-alpha-aminoacyl-tRNA + H2O = an N-acyl-L-amino acid + a tRNA + H(+). Its function is as follows. Hydrolyzes ribosome-free peptidyl-tRNAs (with 1 or more amino acids incorporated), which drop off the ribosome during protein synthesis, or as a result of ribosome stalling. Catalyzes the release of premature peptidyl moieties from peptidyl-tRNA molecules trapped in stalled 50S ribosomal subunits, and thus maintains levels of free tRNAs and 50S ribosomes. The protein is Peptidyl-tRNA hydrolase of Bradyrhizobium sp. (strain ORS 278).